The chain runs to 525 residues: Vesicular inhibitory amino acid transporter (525 aa).

The Cytoplasmic segment spans residues 1-132; that stretch reads MATLLRSKLS…WNVTNAIQGM (132 aa). The disordered stretch occupies residues 83 to 107; that stretch reads IHYQRGSGAPLPPSGSKDQVGGGGE. A helical transmembrane segment spans residues 133 to 153; it reads FVLGLPYAILHGGYLGLFLII. At 154–204 the chain is on the lumenal, vesicle side; that stretch reads FAAVVCCYTGKILIACLYEENEDGEVVRVRDSYVAIANACCAPRFPTLGGR. Residue Y186 is modified to 3'-nitrotyrosine. The chain crosses the membrane as a helical span at residues 205-225; it reads VVNVAQIIELVMTCILYVVVS. At 226 to 265 the chain is on the cytoplasmic side; that stretch reads GNLMYNSFPGLPVSQKSWSIIATAVLLPCAFLKNLKAVSK. A helical membrane pass occupies residues 266 to 286; it reads FSLLCTLAHFVINILVIAYCL. Over 287-305 the chain is Lumenal, vesicle; sequence SRARDWAWEKVKFYIDVKK. A helical membrane pass occupies residues 306-326; the sequence is FPISIGIIVFSYTSQIFLPSL. Topologically, residues 327-341 are cytoplasmic; it reads EGNMQQPSEFHCMMN. A helical membrane pass occupies residues 342–362; that stretch reads WTHIAACVLKGLFALVAYLTW. Over 363–383 the chain is Lumenal, vesicle; sequence ADETKEVITDNLPGSIRAVVN. Residues 384-404 form a helical membrane-spanning segment; it reads IFLVAKALLSYPLPFFAAVEV. Over 405–438 the chain is Cytoplasmic; the sequence is LEKSLFQEGSRAFFPACYSGDGRLKSWGLTLRCA. The helical transmembrane segment at 439 to 459 threads the bilayer; that stretch reads LVVFTLLMAIYVPHFALLMGL. The Lumenal, vesicle segment spans residues 460 to 461; the sequence is TG. Residues 462-482 form a helical membrane-spanning segment; that stretch reads SLTGAGLCFLLPSLFHLRLLW. Residues 483-489 are Cytoplasmic-facing; sequence RKLLWHQ. The helical transmembrane segment at 490–510 threads the bilayer; sequence VFFDVAIFVIGGICSVSGFVH. Residues 511–525 are Lumenal, vesicle-facing; that stretch reads SLEGLIEAYRTNAED.

Belongs to the amino acid/polyamine transporter 2 family. In terms of tissue distribution, retina. Expressed throughout the horizontal cells or more specifically at the terminals.

Its subcellular location is the cytoplasmic vesicle membrane. The protein resides in the presynapse. The enzyme catalyses 4-aminobutanoate(out) + n H(+)(in) = 4-aminobutanoate(in) + n H(+)(out). It catalyses the reaction glycine(out) + n H(+)(in) = glycine(in) + n H(+)(out). It carries out the reaction beta-alanine(out) + n H(+)(in) = beta-alanine(in) + n H(+)(out). In terms of biological role, antiporter that exchanges vesicular protons for cytosolic 4-aminobutanoate or to a lesser extend glycine, thus allowing their secretion from nerve terminals. The transport is equally dependent on the chemical and electrical components of the proton gradient. May also transport beta-alanine. Acidification of GABAergic synaptic vesicles is a prerequisite for 4-aminobutanoate uptake. The sequence is that of Vesicular inhibitory amino acid transporter from Homo sapiens (Human).